Here is a 390-residue protein sequence, read N- to C-terminus: Protein-glutamate methylesterase/protein-glutamine glutaminase 1 (390 aa).

Residues 4–121 (KVLVVDDSGF…SRNPQKVKQL (118 aa)) form the Response regulatory domain. A 4-aspartylphosphate modification is found at D55. Positions 132-186 (SNRRSSGIGSASAASPAPAAPAPSTLSSRAPAPSAAAPARAVPSRTVAPAAAPAA) are enriched in low complexity. The segment at 132 to 201 (SNRRSSGIGS…PAHPTTTGTA (70 aa)) is disordered. Positions 195–387 (PTTTGTAKRK…LDDIGRHLVE (193 aa)) constitute a CheB-type methylesterase domain. Catalysis depends on residues S214, H241, and D334.

The protein belongs to the CheB family. Post-translationally, phosphorylated by CheA. Phosphorylation of the N-terminal regulatory domain activates the methylesterase activity.

The protein localises to the cytoplasm. It carries out the reaction [protein]-L-glutamate 5-O-methyl ester + H2O = L-glutamyl-[protein] + methanol + H(+). The catalysed reaction is L-glutaminyl-[protein] + H2O = L-glutamyl-[protein] + NH4(+). Functionally, involved in chemotaxis. Part of a chemotaxis signal transduction system that modulates chemotaxis in response to various stimuli. Catalyzes the demethylation of specific methylglutamate residues introduced into the chemoreceptors (methyl-accepting chemotaxis proteins or MCP) by CheR. Also mediates the irreversible deamidation of specific glutamine residues to glutamic acid. In Pseudomonas syringae pv. tomato (strain ATCC BAA-871 / DC3000), this protein is Protein-glutamate methylesterase/protein-glutamine glutaminase 1.